The primary structure comprises 1072 residues: Error-prone DNA polymerase (1072 aa).

This sequence belongs to the DNA polymerase type-C family. DnaE2 subfamily.

The protein localises to the cytoplasm. It carries out the reaction DNA(n) + a 2'-deoxyribonucleoside 5'-triphosphate = DNA(n+1) + diphosphate. DNA polymerase involved in damage-induced mutagenesis and translesion synthesis (TLS). It is not the major replicative DNA polymerase. In Burkholderia pseudomallei (strain K96243), this protein is Error-prone DNA polymerase.